Reading from the N-terminus, the 609-residue chain is Kelch-like protein 20 (609 aa).

Residues 68-135 (CDVVLVVGAK…AYTSQITVEE (68 aa)) enclose the BTB domain. The 103-residue stretch at 170–272 (CLGIRAFADT…SPKFLVGTVG (103 aa)) folds into the BACK domain. 6 Kelch repeats span residues 319-365 (VLFA…VLDD), 367-413 (LYAV…VLGG), 414-460 (FLYA…VLGG), 462-507 (LYAV…VYQD), 509-554 (IYAV…VVNG), and 556-601 (LMAV…VIKM).

As to quaternary structure, component of the BCR(KLHL20) E3 ubiquitin ligase complex, at least composed of CUL3, KLHL20 and RBX1. Interacts with PDZ-RhoGEF/ARHGEF11, DAPK1, PML and CORO7. Interacts with F-actin. Interacts with IFN-gamma (IFNG). Interacts (via kelch repeats) with IVNS1ABP (via kelch repeats); this interaction blocks the assembly of CUL3-KLHL20 complex.

The protein resides in the cytoplasm. The protein localises to the perinuclear region. It is found in the nucleus. It localises to the golgi apparatus. Its subcellular location is the trans-Golgi network. The protein resides in the cell projection. The protein localises to the axon. It is found in the dendrite. It functions in the pathway protein modification; protein ubiquitination. Functionally, substrate-specific adapter of a BCR (BTB-CUL3-RBX1) E3 ubiquitin-protein ligase complex involved in interferon response and anterograde Golgi to endosome transport. The BCR(KLHL20) E3 ubiquitin ligase complex mediates the ubiquitination of DAPK1, leading to its degradation by the proteasome, thereby acting as a negative regulator of apoptosis. The BCR(KLHL20) E3 ubiquitin ligase complex also specifically mediates 'Lys-33'-linked ubiquitination. Involved in anterograde Golgi to endosome transport by mediating 'Lys-33'-linked ubiquitination of CORO7, promoting interaction between CORO7 and EPS15, thereby facilitating actin polymerization and post-Golgi trafficking. Also acts as a regulator of endothelial migration during angiogenesis by controlling the activation of Rho GTPases. The BCR(KLHL20) E3 ubiquitin ligase complex acts as a regulator of neurite outgrowth by mediating ubiquitination and degradation of PDZ-RhoGEF/ARHGEF11. The protein is Kelch-like protein 20 (KLHL20) of Pongo abelii (Sumatran orangutan).